The following is a 404-amino-acid chain: Tryptophan synthase beta chain (404 aa).

N6-(pyridoxal phosphate)lysine is present on lysine 95.

This sequence belongs to the TrpB family. As to quaternary structure, tetramer of two alpha and two beta chains. Pyridoxal 5'-phosphate is required as a cofactor.

It carries out the reaction (1S,2R)-1-C-(indol-3-yl)glycerol 3-phosphate + L-serine = D-glyceraldehyde 3-phosphate + L-tryptophan + H2O. The protein operates within amino-acid biosynthesis; L-tryptophan biosynthesis; L-tryptophan from chorismate: step 5/5. The beta subunit is responsible for the synthesis of L-tryptophan from indole and L-serine. The sequence is that of Tryptophan synthase beta chain (trpB) from Thermus thermophilus (strain ATCC BAA-163 / DSM 7039 / HB27).